Here is a 109-residue protein sequence, read N- to C-terminus: Acylphosphatase (109 aa).

The Acylphosphatase-like domain maps to 22–109; the sequence is RLRARVEGVV…GEFSSFDVVY (88 aa). Catalysis depends on residues Arg37 and Asn55.

The protein belongs to the acylphosphatase family.

The catalysed reaction is an acyl phosphate + H2O = a carboxylate + phosphate + H(+). The protein is Acylphosphatase (acyP) of Arthrobacter sp. (strain FB24).